We begin with the raw amino-acid sequence, 467 residues long: Argininosuccinate lyase (467 aa).

It belongs to the lyase 1 family. Argininosuccinate lyase subfamily.

Its subcellular location is the cytoplasm. The catalysed reaction is 2-(N(omega)-L-arginino)succinate = fumarate + L-arginine. It participates in amino-acid biosynthesis; L-arginine biosynthesis; L-arginine from L-ornithine and carbamoyl phosphate: step 3/3. This chain is Argininosuccinate lyase, found in Nitrosococcus oceani (strain ATCC 19707 / BCRC 17464 / JCM 30415 / NCIMB 11848 / C-107).